Here is a 162-residue protein sequence, read N- to C-terminus: Nucleotide-binding protein Adeh_0094 (162 aa).

Belongs to the YajQ family.

Functionally, nucleotide-binding protein. In Anaeromyxobacter dehalogenans (strain 2CP-C), this protein is Nucleotide-binding protein Adeh_0094.